Here is a 719-residue protein sequence, read N- to C-terminus: Pesticidal crystal protein Cry1Ib (719 aa).

It belongs to the delta endotoxin family.

Promotes colloidosmotic lysis by binding to the midgut epithelial cells of certain coleopteran and lepidopteran species. Active on Plutella xylostella but not on Bombyx mori. The sequence is that of Pesticidal crystal protein Cry1Ib (cry1Ib) from Bacillus thuringiensis subsp. entomocidus.